Reading from the N-terminus, the 171-residue chain is Ribosome maturation factor RimM (171 aa).

In terms of domain architecture, PRC barrel spans 97-169 (DGEFYYHEII…RVDVSIMEGL (73 aa)).

It belongs to the RimM family. As to quaternary structure, binds ribosomal protein uS19.

It localises to the cytoplasm. Functionally, an accessory protein needed during the final step in the assembly of 30S ribosomal subunit, possibly for assembly of the head region. Essential for efficient processing of 16S rRNA. May be needed both before and after RbfA during the maturation of 16S rRNA. It has affinity for free ribosomal 30S subunits but not for 70S ribosomes. The polypeptide is Ribosome maturation factor RimM (Lactococcus lactis subsp. lactis (strain IL1403) (Streptococcus lactis)).